A 313-amino-acid polypeptide reads, in one-letter code: Alpha-S1-casein (313 aa).

The first 15 residues, 1-15 (MKLLILTCLVAAAFA), serve as a signal peptide directing secretion. Over residues 77-96 (ASEEQAMASAQEDSSISSSS) the composition is skewed to low complexity. The tract at residues 77-111 (ASEEQAMASAQEDSSISSSSEESEEAIPNITEQKN) is disordered. A phosphoserine mark is found at S90, S91, S93, S94, S95, and S96. Tandem repeats lie at residues 135-140 (LLQKAS), 141-146 (LAKQAS), 147-152 (LFQQPS), 153-158 (LVQQAS), 159-164 (LFQQPS), 165-170 (LLQQAS), 171-176 (LFQQPS), 177-182 (MAQQAS), 183-188 (LLQQLL), 189-194 (LAQQPS), 195-200 (LALQVS), 201-206 (PAQQSS), 207-212 (LVQQAF), 213-218 (LAQQAS), and 219-224 (LAQKHH). A 15 X 6 AA tandem repeats region spans residues 135-224 (LLQKASLAKQ…QQASLAQKHH (90 aa)).

Belongs to the alpha-casein family. As to expression, mammary gland specific. Secreted in milk.

It localises to the secreted. Important role in the capacity of milk to transport calcium phosphate. This is Alpha-S1-casein (Csn1s1) from Mus musculus (Mouse).